Here is a 627-residue protein sequence, read N- to C-terminus: 1-deoxy-D-xylulose-5-phosphate synthase (627 aa).

Thiamine diphosphate-binding positions include H75 and 116–118 (AHS). Mg(2+) is bound at residue D147. Thiamine diphosphate contacts are provided by residues 148-149 (GA), N177, Y284, and E366. N177 provides a ligand contact to Mg(2+).

The protein belongs to the transketolase family. DXPS subfamily. Homodimer. Requires Mg(2+) as cofactor. It depends on thiamine diphosphate as a cofactor.

The catalysed reaction is D-glyceraldehyde 3-phosphate + pyruvate + H(+) = 1-deoxy-D-xylulose 5-phosphate + CO2. Its pathway is metabolic intermediate biosynthesis; 1-deoxy-D-xylulose 5-phosphate biosynthesis; 1-deoxy-D-xylulose 5-phosphate from D-glyceraldehyde 3-phosphate and pyruvate: step 1/1. Functionally, catalyzes the acyloin condensation reaction between C atoms 2 and 3 of pyruvate and glyceraldehyde 3-phosphate to yield 1-deoxy-D-xylulose-5-phosphate (DXP). This Bordetella petrii (strain ATCC BAA-461 / DSM 12804 / CCUG 43448) protein is 1-deoxy-D-xylulose-5-phosphate synthase.